Reading from the N-terminus, the 318-residue chain is sn-1 stearoyl-lipid 9-desaturase (318 aa).

Helical transmembrane passes span 56-76 (VIFF…PQFF) and 80-100 (AVGM…TLGF). The Histidine box-1 signature appears at 101 to 106 (HRCISH). Residues 117 to 137 (YIFVICGTLACQGGVFEWVGL) form a helical membrane-spanning segment. The short motif at 138 to 142 (HRMHH) is the Histidine box-2 element. The helical transmembrane segment at 201-221 (VALGLILFALGGWPFVIWGIF) threads the bilayer. Residues 271 to 275 (HHAYQ) carry the Histidine box-3 motif.

Belongs to the fatty acid desaturase type 2 family. The cofactor is Fe(2+).

The protein localises to the cellular thylakoid membrane. The enzyme catalyses a 1-octadecanoyl 2-acyl-glycerolipid + 2 reduced [2Fe-2S]-[ferredoxin] + O2 + 2 H(+) = a 1-[(9Z)-octadecenoyl]-2-acyl-glycerolipid + 2 oxidized [2Fe-2S]-[ferredoxin] + 2 H2O. Its pathway is lipid metabolism; polyunsaturated fatty acid biosynthesis. Its function is as follows. Desaturase involved in fatty acid biosynthesis. Introduces a double bond at carbon 9 of stearoyl groups (18:0) attached to the sn-1 position of the glycerol moiety of membrane glycerolipids. Does not desaturate palmitic acid (16:0), palmitoleic acid (16:1) and cis-vaccenic acid (18:1). The protein is sn-1 stearoyl-lipid 9-desaturase of Synechocystis sp. (strain ATCC 27184 / PCC 6803 / Kazusa).